An 830-amino-acid polypeptide reads, in one-letter code: Post-transcriptional regulator MKT1 (830 aa).

Residue lysine 4 forms a Glycyl lysine isopeptide (Lys-Gly) (interchain with G-Cter in ubiquitin) linkage. An interaction with PBP1 region spans residues 130-380 (RSRGWTQWNN…SPATTVTKNA (251 aa)). Residues 347-400 (DSEKNNKDGKKSNLSSPSSASSSASPATTVTKNASEKLTYEKSSTKEVRKPRDI) are disordered. Residues serine 358, serine 362, and serine 371 each carry the phosphoserine modification. Residues 361 to 373 (SSPSSASSSASPA) are compositionally biased toward low complexity. Basic and acidic residues predominate over residues 380-400 (ASEKLTYEKSSTKEVRKPRDI).

The protein belongs to the XPG/RAD2 endonuclease family. In terms of assembly, interacts (via C-terminus) with PBP1 (via C-terminus).

It localises to the cytoplasm. The protein localises to the cytosol. In terms of biological role, involved in 3'-UTR mediated RNA regulation. Binds to RNA-binding and RNA regulatory proteins. Complexes with PAB1-binding protein to promote mRNA interactions with poly(A)-binding protein. Promotes mating-type switching in mother cells by positively regulating HO expression. The polypeptide is Post-transcriptional regulator MKT1 (MKT1) (Saccharomyces cerevisiae (strain ATCC 204508 / S288c) (Baker's yeast)).